The chain runs to 387 residues: Formate-dependent phosphoribosylglycinamide formyltransferase (387 aa).

N(1)-(5-phospho-beta-D-ribosyl)glycinamide is bound by residues 15 to 16 (EL) and E75. ATP is bound by residues R106, K147, 152 to 157 (SSGKGQ), 187 to 190 (EEFI), and E195. The region spanning 111-301 (DLASNELNIR…EFELHLRAVL (191 aa)) is the ATP-grasp domain. Residues E260 and E272 each coordinate Mg(2+). Residues D279, K349, and 356–357 (RR) contribute to the N(1)-(5-phospho-beta-D-ribosyl)glycinamide site.

This sequence belongs to the PurK/PurT family. As to quaternary structure, homodimer.

It carries out the reaction N(1)-(5-phospho-beta-D-ribosyl)glycinamide + formate + ATP = N(2)-formyl-N(1)-(5-phospho-beta-D-ribosyl)glycinamide + ADP + phosphate + H(+). It functions in the pathway purine metabolism; IMP biosynthesis via de novo pathway; N(2)-formyl-N(1)-(5-phospho-D-ribosyl)glycinamide from N(1)-(5-phospho-D-ribosyl)glycinamide (formate route): step 1/1. Functionally, involved in the de novo purine biosynthesis. Catalyzes the transfer of formate to 5-phospho-ribosyl-glycinamide (GAR), producing 5-phospho-ribosyl-N-formylglycinamide (FGAR). Formate is provided by PurU via hydrolysis of 10-formyl-tetrahydrofolate. This is Formate-dependent phosphoribosylglycinamide formyltransferase from Prochlorococcus marinus (strain NATL1A).